We begin with the raw amino-acid sequence, 417 residues long: Succinate--CoA ligase [ADP-forming] subunit beta, mitochondrial (417 aa).

The transit peptide at 1–24 (MLRKLANQSLSVAGKWQQQQLRRL) directs the protein to the mitochondrion. One can recognise an ATP-grasp domain in the interval 32–275 (AELMSKYGIN…SSQEDPREVA (244 aa)). ATP-binding positions include Lys71, 78–80 (GRG), and Glu138. Asn230 and Asp244 together coordinate Mg(2+). Residues Asn295 and 352–354 (GIM) contribute to the substrate site.

This sequence belongs to the succinate/malate CoA ligase beta subunit family. In terms of assembly, heterodimer of an alpha and a beta subunit. Mg(2+) is required as a cofactor. Expressed in roots, stems, flowers, leaves and fruits.

Its subcellular location is the mitochondrion. It carries out the reaction succinate + ATP + CoA = succinyl-CoA + ADP + phosphate. The protein operates within carbohydrate metabolism; tricarboxylic acid cycle; succinate from succinyl-CoA (ligase route): step 1/1. Succinyl-CoA synthetase functions in the citric acid cycle (TCA), coupling the hydrolysis of succinyl-CoA to the synthesis of ATP and thus represents the only step of substrate-level phosphorylation in the TCA. The beta subunit provides nucleotide specificity of the enzyme and binds the substrate succinate, while the binding sites for coenzyme A and phosphate are found in the alpha subunit. The chain is Succinate--CoA ligase [ADP-forming] subunit beta, mitochondrial from Solanum lycopersicum (Tomato).